A 155-amino-acid polypeptide reads, in one-letter code: Ribosome maturation factor RimP (155 aa).

This sequence belongs to the RimP family.

The protein localises to the cytoplasm. In terms of biological role, required for maturation of 30S ribosomal subunits. This chain is Ribosome maturation factor RimP, found in Prochlorococcus marinus subsp. pastoris (strain CCMP1986 / NIES-2087 / MED4).